The following is a 182-amino-acid chain: Vomeronasal secretory protein 1 (182 aa).

A signal peptide spans 1–18 (MRALLLIISFCLVAVLQA). The N-linked (GlcNAc...) asparagine glycan is linked to asparagine 30. Cysteines 76 and 168 form a disulfide.

It belongs to the calycin superfamily. Lipocalin family. In terms of tissue distribution, specifically expressed in vomeronasal and posterior glands of the nasal septum, the ducts of which open into the lumen of the vomeronasal organ.

The protein resides in the secreted. Functionally, transport of lipophilic molecules, possible pheromone-carrier. The chain is Vomeronasal secretory protein 1 (Lcn3) from Mus musculus (Mouse).